Here is a 233-residue protein sequence, read N- to C-terminus: Large ribosomal subunit protein uL1 (233 aa).

The protein belongs to the universal ribosomal protein uL1 family. In terms of assembly, part of the 50S ribosomal subunit.

Its function is as follows. Binds directly to 23S rRNA. The L1 stalk is quite mobile in the ribosome, and is involved in E site tRNA release. Functionally, protein L1 is also a translational repressor protein, it controls the translation of the L11 operon by binding to its mRNA. The chain is Large ribosomal subunit protein uL1 from Rhizobium etli (strain CIAT 652).